Here is a 438-residue protein sequence, read N- to C-terminus: MEHAATTGPRPGPPSRRVENVVLRAKDWLPGAPGGTAVWATSLEAEVPPDLALNKEQQLQISKELVDIQITTHHLHEQHEAEIFQLKSEILRLESRVLELELRGDGTSQGCAVPVESDPRHPRAAAQELRHKAQVPGHSDDHRFQVQPKNTMNPENEQHRLGSGLQGEVKWALEHQEARQQALVTRVATLGRQLQGAREEARAAGQRLATQAVVLCSCQGQLRQAEAENARLQLQLKKLKDEYVLRLQHCAWQAVEHADGAGQAPATTALRTFLEATLEDIRAAHRSREQQLARAARSYHKRLVDLSRRHEELLVAYRAPGNPQAIFDIASLDLEPLPVPLVTDFSHREDQHGGPGALLSSPKKRPGGASQGGTSEPQGLDAASWAQIHQKLRDFSRSTQSWNGSGHSCWSGPRWLKSNFLSYRSTWTSTWAGTSTKS.

2 coiled-coil regions span residues 74–105 and 217–246; these read HLHEQHEAEIFQLKSEILRLESRVLELELRGD and SCQGQLRQAEAENARLQLQLKKLKDEYVLR. Residues 345-381 are disordered; the sequence is FSHREDQHGGPGALLSSPKKRPGGASQGGTSEPQGLD.

This sequence belongs to the CCDC78 family. As to expression, expressed primarily in skeletal muscle.

The protein localises to the cytoplasm. It is found in the cytoskeleton. Its subcellular location is the microtubule organizing center. The protein resides in the centrosome. It localises to the centriole. The protein localises to the perinuclear region. It is found in the cell membrane. Its subcellular location is the sarcolemma. The protein resides in the sarcoplasmic reticulum. Functionally, component of the deuterosome, a structure that promotes de novo centriole amplification in multiciliated cells that can generate more than 100 centrioles. Deuterosome-mediated centriole amplification occurs in terminally differentiated multiciliated cells (G1/0) and not in S phase. Essential for centriole amplification and is required for CEP152 localization to the deuterosome. The chain is Coiled-coil domain-containing protein 78 (CCDC78) from Homo sapiens (Human).